A 574-amino-acid polypeptide reads, in one-letter code: Ribonuclease Y (574 aa).

A helical membrane pass occupies residues 1–21 (MSLLDLVLLLLVLGLGGVLLL). The KH domain maps to 264–327 (AVTVVPIPSD…EIARMALEEL (64 aa)). One can recognise an HD domain in the interval 390 to 483 (VLKHSIQVAH…VAAADALSAA (94 aa)).

It belongs to the RNase Y family.

The protein resides in the cell membrane. Functionally, endoribonuclease that initiates mRNA decay. The chain is Ribonuclease Y from Thermus thermophilus (strain ATCC BAA-163 / DSM 7039 / HB27).